Here is a 149-residue protein sequence, read N- to C-terminus: Large ribosomal subunit protein bL9 (149 aa).

The protein belongs to the bacterial ribosomal protein bL9 family.

Binds to the 23S rRNA. The chain is Large ribosomal subunit protein bL9 from Klebsiella pneumoniae subsp. pneumoniae (strain ATCC 700721 / MGH 78578).